The chain runs to 890 residues: Calcium-transporting ATPase (890 aa).

Over 1 to 47 (MKFHEMGQTDLLEATNTSMKQGLTEKEVKKRLDKHGPNELQEGKKTS) the chain is Cytoplasmic. Residues 48 to 68 (ALLLFFAQFKDFMVLVLLAAT) traverse the membrane as a helical segment. Residues 69-78 (LISGFLGEYV) are Extracellular-facing. A helical transmembrane segment spans residues 79–99 (DAVAIIAIVFVNGILGFFQER). Residues 100–238 (RAEQSLQALK…TLSTPLQRRL (139 aa)) lie on the Cytoplasmic side of the membrane. Residues 239–258 (EQLGKILIVVALLLTVLVVA) traverse the membrane as a helical segment. Over 259 to 270 (VGVIQGHDLYSM) the chain is Extracellular. The helical transmembrane segment at 271-288 (FLAGVSLAVAAIPEGLPA) threads the bilayer. Ca(2+)-binding residues include V279, A280, I282, and E284. Residues 289–688 (IVTVALSLGV…KEGRNIYENI (400 aa)) are Cytoplasmic-facing. Residue D326 is the 4-aspartylphosphate intermediate of the active site. Residues D633 and D637 each coordinate Mg(2+). Residues 689 to 708 (RKFIRYLLASNVGEILVMLF) form a helical membrane-spanning segment. Ca(2+) is bound by residues N699 and E702. Over 709 to 718 (AMLLALPLPL) the chain is Extracellular. A helical transmembrane segment spans residues 719–739 (VPIQILWVNLVTDGLPAMALG). Ca(2+)-binding residues include N727, T730, and D731. Residues 740–759 (MDQPEGDVMKRKPRHPKEGV) lie on the Cytoplasmic side of the membrane. A helical membrane pass occupies residues 760-782 (FARKLGWKVVSRGFLIGVATILA). Over 783-798 (FIIVYHRNPENLAYAQ) the chain is Extracellular. Residues 799–818 (TIAFATLVLAQLIHVFDCRS) form a helical membrane-spanning segment. Residues 819-830 (ETSVFSRNPFQN) lie on the Cytoplasmic side of the membrane. A helical transmembrane segment spans residues 831-849 (LYLIGAVLSSILLMLVVIY). Residues 850–864 (YPPLQPIFHTVAITP) lie on the Extracellular side of the membrane. The helical transmembrane segment at 865–885 (GDWMLVIGMSAIPTFLLAGSL) threads the bilayer. Residues 886-890 (LTRKK) are Cytoplasmic-facing.

It belongs to the cation transport ATPase (P-type) (TC 3.A.3) family. Type IIA subfamily. Post-translationally, phosphorylated in a Ca(2+)-dependent manner starting 4 hours after shifting to sporulation medium.

It is found in the cell membrane. The enzyme catalyses Ca(2+)(in) + ATP + H2O = Ca(2+)(out) + ADP + phosphate + H(+). Its function is as follows. This magnesium-dependent enzyme catalyzes the hydrolysis of ATP coupled with the transport of calcium. The polypeptide is Calcium-transporting ATPase (yloB) (Bacillus subtilis (strain 168)).